The chain runs to 98 residues: NADH-ubiquinone oxidoreductase chain 4L (98 aa).

A run of 3 helical transmembrane segments spans residues 1-21 (MTTM…GVFI), 29-49 (TLLC…LILL), and 59-79 (LPLI…ALLV).

This sequence belongs to the complex I subunit 4L family. In terms of assembly, core subunit of respiratory chain NADH dehydrogenase (Complex I) which is composed of 45 different subunits.

It localises to the mitochondrion inner membrane. It carries out the reaction a ubiquinone + NADH + 5 H(+)(in) = a ubiquinol + NAD(+) + 4 H(+)(out). Its function is as follows. Core subunit of the mitochondrial membrane respiratory chain NADH dehydrogenase (Complex I) which catalyzes electron transfer from NADH through the respiratory chain, using ubiquinone as an electron acceptor. Part of the enzyme membrane arm which is embedded in the lipid bilayer and involved in proton translocation. This is NADH-ubiquinone oxidoreductase chain 4L (MT-ND4L) from Ornithorhynchus anatinus (Duckbill platypus).